The chain runs to 382 residues: MTEQRPLTIALVAGETSGDILGAGLIRALKEHVPNARFVGVAGPRMQAEGCEAWYEMEELAVMGIVEVLGRLRRLLHIRADLTKRFGELKPDVFVGIDAPDFNITLEGNLKKQGIKTIHYVSPSVWAWRQKRVFKIGRATDLVLAFLPFEKAFYDKYNVPCRFIGHTMADAMPLDPDKNAARDVLGIPHDAHCLALLPGSRGAEVEMLSADFLKTAQLLRQTYPDLEIVVPLVNAKRREQFERIKAEVAPDLSVHLLDGMGREAMVASDAALLASGTAALECMLAKCPMVVGYRMKPFTFWLAKRLVKTDYVSLPNLLAGRELVKELLQEECEPQKLAAALLPLLANGKTSHAMHDTFRELHQQIRCNADEQAAQAVLELAQ.

Belongs to the LpxB family.

It catalyses the reaction 2-N,3-O-bis[(3R)-3-hydroxytetradecanoyl]-alpha-D-glucosaminyl 1-phosphate + UDP-2-N,3-O-bis[(3R)-3-hydroxytetradecanoyl]-alpha-D-glucosamine = lipid A disaccharide (E. coli) + UDP + H(+). It carries out the reaction a lipid X + a UDP-2-N,3-O-bis[(3R)-3-hydroxyacyl]-alpha-D-glucosamine = a lipid A disaccharide + UDP + H(+). The protein operates within glycolipid biosynthesis; lipid IV(A) biosynthesis; lipid IV(A) from (3R)-3-hydroxytetradecanoyl-[acyl-carrier-protein] and UDP-N-acetyl-alpha-D-glucosamine: step 5/6. Its function is as follows. Condensation of UDP-2,3-diacylglucosamine and 2,3-diacylglucosamine-1-phosphate to form lipid A disaccharide, a precursor of lipid A, a phosphorylated glycolipid that anchors the lipopolysaccharide to the outer membrane of the cell. The sequence is that of Lipid-A-disaccharide synthase from Escherichia coli (strain K12 / MC4100 / BW2952).